A 102-amino-acid polypeptide reads, in one-letter code: Small ribosomal subunit protein eS24 (102 aa).

The interval 70–102 is disordered; it reads VYDSPAQAAEVEHDHMLERNKIGADDADAEEAE. Over residues 79–93 the composition is skewed to basic and acidic residues; the sequence is EVEHDHMLERNKIGA.

This sequence belongs to the eukaryotic ribosomal protein eS24 family.

The polypeptide is Small ribosomal subunit protein eS24 (Halobacterium salinarum (strain ATCC 29341 / DSM 671 / R1)).